The chain runs to 248 residues: PF03932 family protein CutC (248 aa).

This sequence belongs to the CutC family. Homodimer.

The protein resides in the cytoplasm. The chain is PF03932 family protein CutC from Escherichia coli O157:H7.